Reading from the N-terminus, the 482-residue chain is Tripartite motif-containing protein 10 (482 aa).

The RING-type zinc-finger motif lies at 16-61 (CPICQGTLREPVTIDCGHNFCCVCLTRYLEIPCLDPGELPTCPLCK). A B box-type zinc finger spans residues 95–136 (EEEDVCLEHREKVYYFCEDDEMQLCVVCREAWEHRHHTVRFL). Residues C100, H103, C122, and H128 each coordinate Zn(2+). One can recognise a B30.2/SPRY domain in the interval 293–482 (REMKTFLEKL…GRGSKFSLSS (190 aa)).

The protein belongs to the TRIM/RBCC family. In terms of assembly, interacts with IFNAR1; this interaction prevents association of IFNAR1 with TYK2.

The protein resides in the cytoplasm. Functionally, E3 ligase that plays an essential role in the differentiation and survival of terminal erythroid cells. May directly bind to PTEN and promote its ubiquitination, resulting in its proteasomal degradation and activation of hypertrophic signaling. In addition, plays a role in immune response regulation by repressing the phosphorylation of STAT1 and STAT2 in the interferon/JAK/STAT signaling pathway independent of its E3 ligase activity. Mechanistically, interacts with the intracellular domain of IFNAR1 and thereby inhibits the association of TYK2 and IFNAR1. This Sus scrofa (Pig) protein is Tripartite motif-containing protein 10 (TRIM10).